Consider the following 101-residue polypeptide: Small ribosomal subunit protein uS10 (101 aa).

It belongs to the universal ribosomal protein uS10 family. Part of the 30S ribosomal subunit.

Functionally, involved in the binding of tRNA to the ribosomes. The polypeptide is Small ribosomal subunit protein uS10 (Corynebacterium efficiens (strain DSM 44549 / YS-314 / AJ 12310 / JCM 11189 / NBRC 100395)).